A 476-amino-acid chain; its full sequence is Probable protein S-acyltransferase 5 (476 aa).

Residues 1–11 (MLDLQPSDRRH) are compositionally biased toward basic and acidic residues. The disordered stretch occupies residues 1-21 (MLDLQPSDRRHGAPSSSGGVS). The next 2 helical transmembrane spans lie at 53 to 73 (SILITVFLITAPVIVFCIFVG) and 85 to 105 (GVSVLAVAVGLILLDLVFLLL). The segment at 119-138 (YPPEPESNEGNGEPRLAHTP) is disordered. One can recognise a DHHC domain in the interval 158 to 208 (KYCDTCMLYRPPRASHCSICNNCVEKFDHHCPWLGQCIGLRNYRFYFMFVL). Residue C188 is the S-palmitoyl cysteine intermediate of the active site. Transmembrane regions (helical) follow at residues 209-223 (CSTLLCIYVHVFCWI) and 246-266 (SIALIIYTFICVWFVGGLTCF). Disordered stretches follow at residues 320-340 (SKEPAIPPRTVNGGMSSPSLQ) and 373-454 (VASR…ASRD). S336 bears the Phosphoserine mark. Basic and acidic residues predominate over residues 387 to 412 (SEGRGIMHSRESSRGRGIMHSRESSR). Phosphoserine is present on S418. Over residues 425-441 (VNEDLRTRDESVSRVGE) the composition is skewed to basic and acidic residues.

This sequence belongs to the DHHC palmitoyltransferase family.

The protein resides in the cell membrane. It carries out the reaction L-cysteinyl-[protein] + hexadecanoyl-CoA = S-hexadecanoyl-L-cysteinyl-[protein] + CoA. In terms of biological role, palmitoyl acyltransferase. This Arabidopsis thaliana (Mouse-ear cress) protein is Probable protein S-acyltransferase 5 (PAT05).